Here is a 448-residue protein sequence, read N- to C-terminus: Proton extrusion protein PxcA (448 aa).

A run of 4 helical transmembrane segments spans residues 231–251 (ILLL…FFLI), 323–343 (IDSI…VLVL), 372–392 (LIIL…WEVI), and 408–428 (FNFL…KYWI).

This sequence belongs to the CemA family.

The protein resides in the cell inner membrane. Its function is as follows. Required for H(+) efflux immediately after light irradiation to form a rapid H(+) concentration gradient across the thylakoid membranes. Together with PxcL, contributes to transient H(+) uptake following dark to light transition. This Rippkaea orientalis (strain PCC 8801 / RF-1) (Cyanothece sp. (strain PCC 8801)) protein is Proton extrusion protein PxcA.